The sequence spans 456 residues: Nuclear distribution protein PAC1 (456 aa).

In terms of domain architecture, LisH spans 9–41 (QADELHKSIIAYLSANDLPNTAAALRAELNLTE). The stretch at 61 to 88 (TSIVRLQKKIMDLEARNAALQSELDNLT) forms a coiled coil. 8 WD repeats span residues 114–153 (SHRD…LEMT), 156–197 (GHTR…KNVR), 201–240 (GHDH…CVRS), 243–282 (GHTG…NPEN), 288–348 (GHEH…LMTL), 350–389 (GHDN…KCVK), 394–437 (AHDR…PDVQ), and 439–456 (RCVI…IFAA).

It belongs to the WD repeat LIS1/nudF family. As to quaternary structure, self-associates. Interacts with NDL1 and dynein.

It localises to the cytoplasm. The protein localises to the cytoskeleton. Its subcellular location is the spindle pole. Functionally, positively regulates the activity of the minus-end directed microtubule motor protein dynein. May enhance dynein-mediated microtubule sliding by targeting dynein to the microtubule plus end. Required for nuclear migration during vegetative growth as well as development. Required for retrograde early endosome (EE) transport from the hyphal tip. Required for localization of dynein to the mitotic spindle poles. Recruits additional proteins to the dynein complex at SPBs. The chain is Nuclear distribution protein PAC1 from Ajellomyces capsulatus (strain H143) (Darling's disease fungus).